Here is a 156-residue protein sequence, read N- to C-terminus: Small ribosomal subunit protein uS17A (156 aa).

The residue at position 2 (serine 2) is an N-acetylserine. Glycyl lysine isopeptide (Lys-Gly) (interchain with G-Cter in ubiquitin) cross-links involve residues lysine 15, lysine 46, lysine 56, lysine 57, lysine 79, lysine 96, lysine 105, lysine 133, lysine 141, and lysine 148.

Belongs to the universal ribosomal protein uS17 family. As to quaternary structure, component of the small ribosomal subunit (SSU). Mature yeast ribosomes consist of a small (40S) and a large (60S) subunit. The 40S small subunit contains 1 molecule of ribosomal RNA (18S rRNA) and 33 different proteins (encoded by 57 genes). The large 60S subunit contains 3 rRNA molecules (25S, 5.8S and 5S rRNA) and 46 different proteins (encoded by 81 genes). Post-translationally, N-terminally acetylated by acetyltransferase NatA.

It is found in the cytoplasm. Its function is as follows. Component of the ribosome, a large ribonucleoprotein complex responsible for the synthesis of proteins in the cell. The small ribosomal subunit (SSU) binds messenger RNAs (mRNAs) and translates the encoded message by selecting cognate aminoacyl-transfer RNA (tRNA) molecules. The large subunit (LSU) contains the ribosomal catalytic site termed the peptidyl transferase center (PTC), which catalyzes the formation of peptide bonds, thereby polymerizing the amino acids delivered by tRNAs into a polypeptide chain. The nascent polypeptides leave the ribosome through a tunnel in the LSU and interact with protein factors that function in enzymatic processing, targeting, and the membrane insertion of nascent chains at the exit of the ribosomal tunnel. The protein is Small ribosomal subunit protein uS17A of Saccharomyces cerevisiae (strain ATCC 204508 / S288c) (Baker's yeast).